Reading from the N-terminus, the 612-residue chain is Glutamine--fructose-6-phosphate aminotransferase [isomerizing] (612 aa).

Cys-2 (nucleophile; for GATase activity) is an active-site residue. The region spanning 2–221 (CGIVGIVSQR…NGDIAEITNS (220 aa)) is the Glutamine amidotransferase type-2 domain. SIS domains are found at residues 289–429 (FNKT…IRKI) and 461–602 (LVKN…VDHP). Residue Lys-607 is the For Fru-6P isomerization activity of the active site.

In terms of assembly, homodimer.

It is found in the cytoplasm. It carries out the reaction D-fructose 6-phosphate + L-glutamine = D-glucosamine 6-phosphate + L-glutamate. Functionally, catalyzes the first step in hexosamine metabolism, converting fructose-6P into glucosamine-6P using glutamine as a nitrogen source. The protein is Glutamine--fructose-6-phosphate aminotransferase [isomerizing] of Wigglesworthia glossinidia brevipalpis.